We begin with the raw amino-acid sequence, 203 residues long: V-type ATP synthase subunit D (203 aa).

This sequence belongs to the V-ATPase D subunit family.

Produces ATP from ADP in the presence of a proton gradient across the membrane. This chain is V-type ATP synthase subunit D, found in Streptococcus pneumoniae (strain Hungary19A-6).